The following is a 345-amino-acid chain: MNKKKRVLTGDRPTGKLHLGHWVGSIKNRLDLQNNPAYDCFFIIADLHTLTTRVRKEQVVDVDNHIYEVLADWLSVGIDPNKSSIYLQSAIPEIYELHLLFSMLISVNRIMGIPSLKEMAKNASIEEGGLSLGLMGYPVLQSADILLAKAQLVPVGKDNEAHIELTRDIARNFNRLYGEIFPEPETLQGELTSLVGIDGQGKMSKSANNAIYLSDDDATIEDKVRRMYTDPNRIHASTPGRVEGNPLFIYHDIFNPNKEEVEEFKTRYRQGCIKDVEIKTRLAEELIRFLQPFREKRAELLAHPKILQEALQKGTENMCALAKETMEEVHNTLELSRKWRSRLSL.

ATP is bound by residues 12–14 (RPT) and 20–21 (GH). The 'HIGH' region motif lies at 13–21 (PTGKLHLGH). D144 is a binding site for L-tryptophan. ATP is bound by residues 156 to 158 (GKD), L194, and 202 to 206 (KMSKS). Positions 202–206 (KMSKS) match the 'KMSKS' region motif.

This sequence belongs to the class-I aminoacyl-tRNA synthetase family. In terms of assembly, homodimer.

Its subcellular location is the cytoplasm. The enzyme catalyses tRNA(Trp) + L-tryptophan + ATP = L-tryptophyl-tRNA(Trp) + AMP + diphosphate + H(+). Catalyzes the attachment of tryptophan to tRNA(Trp). This chain is Tryptophan--tRNA ligase, found in Chlamydia caviae (strain ATCC VR-813 / DSM 19441 / 03DC25 / GPIC) (Chlamydophila caviae).